Consider the following 29-residue polypeptide: U-homostoxin-Hdu1a (29 aa).

Thr-1 carries an O-linked (GlcNAc...) threonine glycan. 2 disulfide bridges follow: Cys-7/Cys-19 and Cys-10/Cys-25.

It belongs to the sea anemone BBH family.

It is found in the secreted. The protein resides in the nematocyst. In Homostichanthus duerdeni (Sea anemone), this protein is U-homostoxin-Hdu1a.